Here is a 151-residue protein sequence, read N- to C-terminus: S-protein homolog 74 (151 aa).

A signal peptide spans 1 to 25 (MNYIKQFILAICFYLVLTCQDHVLA).

The protein belongs to the plant self-incompatibility (S1) protein family.

The protein localises to the secreted. The protein is S-protein homolog 74 of Arabidopsis thaliana (Mouse-ear cress).